Here is a 254-residue protein sequence, read N- to C-terminus: 4-hydroxy-tetrahydrodipicolinate reductase (254 aa).

NAD(+) is bound at residue 7-12 (GASGRI). Residue Arg35 participates in NADP(+) binding. NAD(+) is bound by residues 91–93 (GTT) and 115–118 (AHNM). His147 (proton donor/acceptor) is an active-site residue. Residue His148 participates in (S)-2,3,4,5-tetrahydrodipicolinate binding. Residue Lys151 is the Proton donor of the active site. 157–158 (GT) lines the (S)-2,3,4,5-tetrahydrodipicolinate pocket.

The protein belongs to the DapB family.

The protein localises to the cytoplasm. It catalyses the reaction (S)-2,3,4,5-tetrahydrodipicolinate + NAD(+) + H2O = (2S,4S)-4-hydroxy-2,3,4,5-tetrahydrodipicolinate + NADH + H(+). It carries out the reaction (S)-2,3,4,5-tetrahydrodipicolinate + NADP(+) + H2O = (2S,4S)-4-hydroxy-2,3,4,5-tetrahydrodipicolinate + NADPH + H(+). The protein operates within amino-acid biosynthesis; L-lysine biosynthesis via DAP pathway; (S)-tetrahydrodipicolinate from L-aspartate: step 4/4. Functionally, catalyzes the conversion of 4-hydroxy-tetrahydrodipicolinate (HTPA) to tetrahydrodipicolinate. This Helicobacter pylori (strain P12) protein is 4-hydroxy-tetrahydrodipicolinate reductase.